A 234-amino-acid chain; its full sequence is Purine nucleoside phosphorylase DeoD-type (234 aa).

A purine D-ribonucleoside is bound at residue H5. Residues G21, R25, R44, and 88–91 (RIGS) contribute to the phosphate site. A purine D-ribonucleoside contacts are provided by residues 180 to 182 (EME) and 204 to 205 (SD). The active-site Proton donor is the D205.

The protein belongs to the PNP/UDP phosphorylase family. As to quaternary structure, homohexamer; trimer of homodimers.

The enzyme catalyses a purine D-ribonucleoside + phosphate = a purine nucleobase + alpha-D-ribose 1-phosphate. The catalysed reaction is a purine 2'-deoxy-D-ribonucleoside + phosphate = a purine nucleobase + 2-deoxy-alpha-D-ribose 1-phosphate. Catalyzes the reversible phosphorolytic breakdown of the N-glycosidic bond in the beta-(deoxy)ribonucleoside molecules, with the formation of the corresponding free purine bases and pentose-1-phosphate. This is Purine nucleoside phosphorylase DeoD-type from Colwellia psychrerythraea (strain 34H / ATCC BAA-681) (Vibrio psychroerythus).